The primary structure comprises 342 residues: Phosphatidate cytidylyltransferase, mitochondrial (342 aa).

It belongs to the TAM41 family. Mg(2+) is required as a cofactor. Requires Co(2+) as cofactor. Cu(2+) serves as cofactor.

The protein resides in the mitochondrion inner membrane. The catalysed reaction is a 1,2-diacyl-sn-glycero-3-phosphate + CTP + H(+) = a CDP-1,2-diacyl-sn-glycerol + diphosphate. Its pathway is phospholipid metabolism; CDP-diacylglycerol biosynthesis; CDP-diacylglycerol from sn-glycerol 3-phosphate: step 3/3. Catalyzes the formation of CDP-diacylglycerol (CDP-DAG) from phosphatidic acid (PA) in the mitochondrial inner membrane. Required for the biosynthesis of the dimeric phospholipid cardiolipin, which stabilizes supercomplexes of the mitochondrial respiratory chain in the mitochondrial inner membrane. This Drosophila melanogaster (Fruit fly) protein is Phosphatidate cytidylyltransferase, mitochondrial.